The chain runs to 203 residues: Chromophore lyase CpcT/CpeT 3 (203 aa).

Belongs to the CpcT/CpeT biliprotein lyase family.

Functionally, covalently attaches a chromophore to Cys residue(s) of phycobiliproteins. This chain is Chromophore lyase CpcT/CpeT 3, found in Gloeobacter violaceus (strain ATCC 29082 / PCC 7421).